A 1025-amino-acid polypeptide reads, in one-letter code: AP-2 complex subunit alpha (1025 aa).

The tract at residues 713 to 737 is disordered; that stretch reads RSIMVPMPPPSRRNTIDDVNSKISS. The residue at position 727 (Thr-727) is a Phosphothreonine. At Ser-733 the chain carries Phosphoserine.

This sequence belongs to the adaptor complexes large subunit family. Adaptor protein complex 2 (AP-2) is a heterotetramer composed of two large adaptins (alpha-type subunit APL3 and beta-type subunit APL1), a medium chain (mu-type subunit APM4) and a small adaptin (sigma-type subunit APS2).

It is found in the cell membrane. The protein resides in the membrane. The protein localises to the coated pit. In terms of biological role, adaptins are components of the adaptor complexes which link clathrin to receptors in coated vesicles. Clathrin-associated protein complexes are believed to interact with the cytoplasmic tails of membrane proteins, leading to their selection and concentration. Alpha adaptin is a subunit of the plasma membrane adaptor. Facilitates interaction between APL1 and APS2. This chain is AP-2 complex subunit alpha (APL3), found in Saccharomyces cerevisiae (strain ATCC 204508 / S288c) (Baker's yeast).